A 326-amino-acid chain; its full sequence is Glyoxylate/hydroxypyruvate reductase B (326 aa).

Catalysis depends on residues arginine 237 and glutamate 266. The active-site Proton donor is the histidine 285.

It belongs to the D-isomer specific 2-hydroxyacid dehydrogenase family. GhrB subfamily. In terms of assembly, homodimer.

It localises to the cytoplasm. The enzyme catalyses glycolate + NADP(+) = glyoxylate + NADPH + H(+). It carries out the reaction (R)-glycerate + NAD(+) = 3-hydroxypyruvate + NADH + H(+). The catalysed reaction is (R)-glycerate + NADP(+) = 3-hydroxypyruvate + NADPH + H(+). Functionally, catalyzes the NADPH-dependent reduction of glyoxylate and hydroxypyruvate into glycolate and glycerate, respectively. This is Glyoxylate/hydroxypyruvate reductase B from Yersinia pestis bv. Antiqua (strain Nepal516).